The sequence spans 253 residues: H repeat-associated putative transposase YbfD (253 aa).

It belongs to the transposase 11 family.

The protein is H repeat-associated putative transposase YbfD (ybfD) of Escherichia coli (strain K12).